The following is a 285-amino-acid chain: 4-hydroxybenzoate octaprenyltransferase (285 aa).

Transmembrane regions (helical) follow at residues 20–37 (IGIY…WLAA), 96–116 (FFFV…PFTI), 138–158 (WPQA…FAAI), 166–186 (AWVI…AYAV), 211–231 (IIGF…DLFG), 234–254 (WLYY…QYLL), and 262–282 (AFKA…GIML).

It belongs to the UbiA prenyltransferase family. It depends on Mg(2+) as a cofactor.

The protein localises to the cell inner membrane. It carries out the reaction all-trans-octaprenyl diphosphate + 4-hydroxybenzoate = 4-hydroxy-3-(all-trans-octaprenyl)benzoate + diphosphate. Its pathway is cofactor biosynthesis; ubiquinone biosynthesis. Catalyzes the prenylation of para-hydroxybenzoate (PHB) with an all-trans polyprenyl group. Mediates the second step in the final reaction sequence of ubiquinone-8 (UQ-8) biosynthesis, which is the condensation of the polyisoprenoid side chain with PHB, generating the first membrane-bound Q intermediate 3-octaprenyl-4-hydroxybenzoate. This is 4-hydroxybenzoate octaprenyltransferase from Hydrogenovibrio crunogenus (strain DSM 25203 / XCL-2) (Thiomicrospira crunogena).